Here is a 500-residue protein sequence, read N- to C-terminus: MNYFPWLTIIVVFPIFAGSLIFFLPHKGNRVIRWYTICICILELLLTTYAFCYHFQLDDPLIQLVEDYKWIDFFDFHWRLGIDGLSIGPILLTGFITTLATLAAWPITRDSRLFHFIMLAMYSGQIGSFSSRDLLLFFIMWELELIPVYLLLAMWGGKKRLYSATKFILYTAGGSVFLLMGVLGVALYGSNEPTLNFETLVNQSYPVVLEIIFYIGFFIAFAVKLPIIPLHTWLPDTHGEAHYSTCMLLAGILLKMGAYGLIRINMELLPHAHSIFSPWLMIIGTIQIIYAASTSLGQRNLKKRIAYSSVSHMGFIIIGISSLTDTGLNGALLQIISHGFIGAALFFLAGTTYDRIRLVYLDEMGGIAIPMPKMFTMFSSFSMASLALPGMSGFVAELIVFFGIITGQKYVLIPKILITFVMAIGMILTPIYSLSMSRQMFYGYKLFNAPKDSFFDSGPRELFLSISIFLPVIGIGIYPDFVLSLAVDKVEVILSNFFYR.

14 consecutive transmembrane segments (helical) span residues 4–24 (FPWL…IFFL), 37–57 (ICIC…HFQL), 87–107 (IGPI…AWPI), 113–130 (LFHF…GSFS), 134–154 (LLLF…LLAM), 167–187 (FILY…GVAL), 208–228 (VLEI…LPII), 242–262 (HYST…YGLI), 272–292 (AHSI…IYAA), 305–325 (IAYS…SLTD), 330–350 (GALL…FLAG), 386–406 (LALP…GIIT), 411–431 (VLIP…LTPI), and 462–482 (LFLS…PDFV).

Belongs to the complex I subunit 4 family.

The protein resides in the plastid. The protein localises to the chloroplast thylakoid membrane. It carries out the reaction a plastoquinone + NADH + (n+1) H(+)(in) = a plastoquinol + NAD(+) + n H(+)(out). It catalyses the reaction a plastoquinone + NADPH + (n+1) H(+)(in) = a plastoquinol + NADP(+) + n H(+)(out). This Atropa belladonna (Belladonna) protein is NAD(P)H-quinone oxidoreductase chain 4, chloroplastic.